Consider the following 366-residue polypeptide: Glutamate 5-kinase (366 aa).

K17 is an ATP binding site. The substrate site is built by S57, D144, and N156. Residues 176–177 (SD) and 216–222 (TGGMASK) contribute to the ATP site. Residues 278-352 (QGILHIDEGA…GKSTQELPAE (75 aa)) enclose the PUA domain.

It belongs to the glutamate 5-kinase family.

It localises to the cytoplasm. The enzyme catalyses L-glutamate + ATP = L-glutamyl 5-phosphate + ADP. The protein operates within amino-acid biosynthesis; L-proline biosynthesis; L-glutamate 5-semialdehyde from L-glutamate: step 1/2. In terms of biological role, catalyzes the transfer of a phosphate group to glutamate to form L-glutamate 5-phosphate. The chain is Glutamate 5-kinase from Rhodococcus opacus (strain B4).